The following is a 406-amino-acid chain: Argininosuccinate synthase (406 aa).

ATP is bound by residues 13–21 (AYSGGLDTS) and alanine 40. L-citrulline-binding residues include tyrosine 91 and serine 96. Glycine 121 is an ATP binding site. Residues threonine 123, asparagine 127, and aspartate 128 each contribute to the L-aspartate site. Asparagine 127 lines the L-citrulline pocket. Positions 131, 182, 191, 267, and 279 each coordinate L-citrulline.

It belongs to the argininosuccinate synthase family. Type 1 subfamily. As to quaternary structure, homotetramer.

The protein resides in the cytoplasm. The enzyme catalyses L-citrulline + L-aspartate + ATP = 2-(N(omega)-L-arginino)succinate + AMP + diphosphate + H(+). It functions in the pathway amino-acid biosynthesis; L-arginine biosynthesis; L-arginine from L-ornithine and carbamoyl phosphate: step 2/3. In Brucella anthropi (strain ATCC 49188 / DSM 6882 / CCUG 24695 / JCM 21032 / LMG 3331 / NBRC 15819 / NCTC 12168 / Alc 37) (Ochrobactrum anthropi), this protein is Argininosuccinate synthase.